Consider the following 551-residue polypeptide: Putative transport protein CGSHiEE_03135 (551 aa).

Transmembrane regions (helical) follow at residues 4–24 (IAIT…IGHW), 28–48 (GVGL…HFTD), 65–85 (FGLI…FFSS), 95–115 (AFAI…HKIA), and 157–177 (VSYA…MWLI). 2 RCK C-terminal domains span residues 191-275 (RFNA…IIGY) and 277-360 (VDAP…VIGN). Helical transmembrane passes span 370-390 (MLPV…PFYI), 402-424 (AGGP…LYWF), 438-458 (IVLF…DTLV), 463-483 (LEWM…AGTI), 492-512 (YLTI…LAFA), and 529-549 (VYPL…VLLW).

Belongs to the AAE transporter (TC 2.A.81) family. YidE subfamily.

The protein localises to the cell membrane. This Haemophilus influenzae (strain PittEE) protein is Putative transport protein CGSHiEE_03135.